The primary structure comprises 466 residues: Trigger factor (466 aa).

The PPIase FKBP-type domain occupies 166–245; that stretch reads GDFAQIDLVA…LNAVKERELP (80 aa). Disordered regions lie at residues 313-332 and 424-466; these read LEQE…TESS and LPDD…AADK. Over residues 426–444 the composition is skewed to acidic residues; sequence DDGEAVDEDATPEDTDAPA. Basic residues predominate over residues 453–466; the sequence is PKKKAAAKKKAADK.

This sequence belongs to the FKBP-type PPIase family. Tig subfamily.

It is found in the cytoplasm. The catalysed reaction is [protein]-peptidylproline (omega=180) = [protein]-peptidylproline (omega=0). Its function is as follows. Involved in protein export. Acts as a chaperone by maintaining the newly synthesized protein in an open conformation. Functions as a peptidyl-prolyl cis-trans isomerase. This chain is Trigger factor, found in Leifsonia xyli subsp. xyli (strain CTCB07).